Here is a 433-residue protein sequence, read N- to C-terminus: Type I acyl-CoA thioesterase mpaH (433 aa).

Residues 58 to 246 (HGVGLPKELY…IKARFGTTAD (189 aa)) form an abhydrolase domain region. Residue valine 60 participates in substrate binding. The Nucleophile role is filled by serine 139. Substrate is bound at residue phenylalanine 140. Catalysis depends on residues aspartate 163 and histidine 365.

The protein belongs to the AB hydrolase superfamily. MpaH hydrolase family. In terms of assembly, homodimer.

The protein localises to the peroxisome matrix. The enzyme catalyses mycophenolyl-CoA + H2O = mycophenolate + CoA + H(+). It participates in secondary metabolite biosynthesis; terpenoid biosynthesis. Its function is as follows. Type I acyl-CoA thioesterase; part of the gene cluster that mediates the biosynthesis of mycophenolic acid (MPA), the first isolated antibiotic natural product in the world obtained from a culture of Penicillium brevicompactum in 1893. MpaH acts as a peroxisomal acyl-CoA hydrolase that converts MPA-CoA into the final product MPA. The first step of the pathway is the synthesis of 5-methylorsellinic acid (5MOA) by the cytosolic polyketide synthase mpaC. 5MOA is then converted to the phthalide compound 5,7-dihydroxy-4,6-dimethylphthalide (DHMP) by the endoplasmic reticulum-bound cytochrome P450 monooxygenase mpaDE. MpaDE first catalyzes hydroxylation of 5-MOA to 4,6-dihydroxy-2-(hydroxymethyl)-3-methylbenzoic acid (DHMB). MpaDE then acts as a lactone synthase that catalyzes the ring closure to convert DHMB into DHMP. The next step is the prenylation of DHMP by the Golgi apparatus-associated prenyltransferase mpaA to yield farnesyl-DHMP (FDHMP). The ER-bound oxygenase mpaB then mediates the oxidative cleavage the C19-C20 double bond in FDHMP to yield FDHMP-3C via a mycophenolic aldehyde intermediate. The O-methyltransferase mpaG catalyzes the methylation of FDHMP-3C to yield MFDHMP-3C. After the cytosolic methylation of FDHMP-3C, MFDHMP-3C enters into peroxisomes probably via free diffusion due to its low molecular weight. Upon a peroxisomal CoA ligation reaction, catalyzed by a beta-oxidation component enzyme acyl-CoA ligase ACL891, MFDHMP-3C-CoA would then be restricted to peroxisomes for the following beta-oxidation pathway steps. The peroxisomal beta-oxidation machinery than converts MFDHMP-3C-CoA into MPA_CoA, via a beta-oxidation chain-shortening process. Finally mpaH acts as a peroxisomal acyl-CoA hydrolase with high substrate specificity toward MPA-CoA to release the final product MPA. In Penicillium brevicompactum, this protein is Type I acyl-CoA thioesterase mpaH.